The sequence spans 183 residues: ATP synthase subunit delta (183 aa).

It belongs to the ATPase delta chain family. F-type ATPases have 2 components, F(1) - the catalytic core - and F(0) - the membrane proton channel. F(1) has five subunits: alpha(3), beta(3), gamma(1), delta(1), epsilon(1). F(0) has three main subunits: a(1), b(2) and c(10-14). The alpha and beta chains form an alternating ring which encloses part of the gamma chain. F(1) is attached to F(0) by a central stalk formed by the gamma and epsilon chains, while a peripheral stalk is formed by the delta and b chains.

The protein resides in the cell inner membrane. F(1)F(0) ATP synthase produces ATP from ADP in the presence of a proton or sodium gradient. F-type ATPases consist of two structural domains, F(1) containing the extramembraneous catalytic core and F(0) containing the membrane proton channel, linked together by a central stalk and a peripheral stalk. During catalysis, ATP synthesis in the catalytic domain of F(1) is coupled via a rotary mechanism of the central stalk subunits to proton translocation. Functionally, this protein is part of the stalk that links CF(0) to CF(1). It either transmits conformational changes from CF(0) to CF(1) or is implicated in proton conduction. The protein is ATP synthase subunit delta of Ehrlichia canis (strain Jake).